A 312-amino-acid polypeptide reads, in one-letter code: uncharacterized protein (312 aa).

A disordered region spans residues 95 to 119 (EKRRENPPKLTLPPLPPPAEERKKP).

It is found in the plastid. It localises to the chloroplast. This is an uncharacterized protein from Chlamydomonas moewusii (Chlamydomonas eugametos).